The primary structure comprises 276 residues: Protein MGF 360-15R (276 aa).

This sequence belongs to the asfivirus MGF 360 family.

Functionally, plays a role in virus cell tropism, and may be required for efficient virus replication in macrophages. The polypeptide is Protein MGF 360-15R (African swine fever virus (isolate Warthog/Namibia/Wart80/1980) (ASFV)).